The primary structure comprises 704 residues: Elongation factor G (704 aa).

The 281-residue stretch at 10-290 (TKVRNIGIMA…AVVDYLPSPL (281 aa)) folds into the tr-type G domain. Residues 19 to 26 (AHIDAGKT), 83 to 87 (DTPGH), and 137 to 140 (NKMD) contribute to the GTP site.

It belongs to the TRAFAC class translation factor GTPase superfamily. Classic translation factor GTPase family. EF-G/EF-2 subfamily.

Its subcellular location is the cytoplasm. Catalyzes the GTP-dependent ribosomal translocation step during translation elongation. During this step, the ribosome changes from the pre-translocational (PRE) to the post-translocational (POST) state as the newly formed A-site-bound peptidyl-tRNA and P-site-bound deacylated tRNA move to the P and E sites, respectively. Catalyzes the coordinated movement of the two tRNA molecules, the mRNA and conformational changes in the ribosome. In Beutenbergia cavernae (strain ATCC BAA-8 / DSM 12333 / CCUG 43141 / JCM 11478 / NBRC 16432 / NCIMB 13614 / HKI 0122), this protein is Elongation factor G.